A 908-amino-acid polypeptide reads, in one-letter code: AdoMet-dependent rRNA methyltransferase SPB1 (908 aa).

S-adenosyl-L-methionine-binding residues include Gly57, Trp59, Asp77, Asp93, and Asp118. Lys158 functions as the Proton acceptor in the catalytic mechanism. Positions 378–422 (MDEEEQITEELQKLQQAKLAKTKRERKRANEKKARELLKLQLNMT) form a coiled coil. 3 disordered regions span residues 440 to 513 (IFDL…YDSY), 535 to 715 (NFDA…DEVK), and 806 to 841 (AKGRKKMKAVARMEKAKKKADGVMESEEMGDGEKAR). Residues 464–493 (DDGEGMDLASESEEEEDEDEEDDEVLDSDE) show a composition bias toward acidic residues. Positions 535–545 (NFDAWHGIQEK) are enriched in basic and acidic residues. 2 stretches are compositionally biased toward acidic residues: residues 546–564 (SDEEGSDDDDGQDDDEEGG) and 579–591 (DSSDSDSDAEPET). Residues 592–610 (EVPKKIKKVSFEKPARSEK) show a composition bias toward basic and acidic residues. 2 stretches are compositionally biased toward acidic residues: residues 650–678 (DGDDEEEEEEDESEEEESDDEDVDMEDAS) and 685–712 (EGDDDFEIVPQAPEDDGPEWDVDDEDQD). Positions 816-827 (ARMEKAKKKADG) are enriched in basic and acidic residues.

Belongs to the class I-like SAM-binding methyltransferase superfamily. RNA methyltransferase RlmE family. SPB1 subfamily. As to quaternary structure, component of the nucleolar and nucleoplasmic pre-60S ribosomal particle.

It is found in the nucleus. The protein localises to the nucleolus. It catalyses the reaction a ribonucleotide in rRNA + S-adenosyl-L-methionine = a 2'-O-methylribonucleotide in rRNA + S-adenosyl-L-homocysteine + H(+). Functionally, required for proper assembly of pre-ribosomal particles during the biogenesis of the 60S ribosomal subunit. The sequence is that of AdoMet-dependent rRNA methyltransferase SPB1 from Cryptococcus neoformans var. neoformans serotype D (strain B-3501A) (Filobasidiella neoformans).